We begin with the raw amino-acid sequence, 740 residues long: Transcription activator of gluconeogenesis NCU03938 (740 aa).

The interval 1–66 is disordered; sequence MPDDVGPAEA…KYDPKDPLRP (66 aa). The segment covering 19 to 37 has biased composition (acidic residues); it reads SDNEYDETEVTTKDDDDEK. Residues 52-65 are compositionally biased toward basic and acidic residues; sequence GDQKKKYDPKDPLR. A DNA-binding region (zn(2)-C6 fungal-type) is located at residues 75–103; it reads CYACQRAHLTCGDERPCQRCIKRGLAEAC. Disordered regions lie at residues 333-405, 532-579, and 639-674; these read PAGP…RQRD, NSDT…KEQP, and APTA…PTGV. Residues 337-351 are compositionally biased toward polar residues; that stretch reads TSLQSPSTENNSPQP. A PAS domain is found at 475-546; it reads ALFEHEEFMH…SISSKGGRGG (72 aa). Over residues 639–658 the composition is skewed to low complexity; sequence APTASGGSGSSNGTVVNGGP.

The protein belongs to the ERT1/acuK family.

The protein localises to the nucleus. Functionally, transcription factor which regulates nonfermentable carbon utilization. Activator of gluconeogenetic genes. This Neurospora crassa (strain ATCC 24698 / 74-OR23-1A / CBS 708.71 / DSM 1257 / FGSC 987) protein is Transcription activator of gluconeogenesis NCU03938.